A 247-amino-acid polypeptide reads, in one-letter code: Ras-like protein family member 11B (247 aa).

A small GTPase-like region spans residues 28-245; that stretch reads AGRRLVKIAV…ALSAKVRTVT (218 aa). GTP-binding positions include 39 to 46, 86 to 93, and 151 to 154; these read GASGVGKT, DTPGIQVH, and NKAD. The segment at 202–228 is disordered; the sequence is PKQQPSSTPEKRRTSLIPRPKSPNMQD.

The protein belongs to the small GTPase superfamily. Ras family.

The enzyme catalyses GTP + H2O = GDP + phosphate + H(+). In Mus musculus (Mouse), this protein is Ras-like protein family member 11B.